Consider the following 338-residue polypeptide: tRNA N6-adenosine threonylcarbamoyltransferase (338 aa).

Residues H111 and H115 each coordinate Fe cation. Substrate is bound by residues 134 to 138, D167, G180, and N275; that span reads LLSGG. Position 304 (D304) interacts with Fe cation.

Belongs to the KAE1 / TsaD family. Fe(2+) serves as cofactor.

The protein resides in the cytoplasm. It catalyses the reaction L-threonylcarbamoyladenylate + adenosine(37) in tRNA = N(6)-L-threonylcarbamoyladenosine(37) in tRNA + AMP + H(+). In terms of biological role, required for the formation of a threonylcarbamoyl group on adenosine at position 37 (t(6)A37) in tRNAs that read codons beginning with adenine. Is involved in the transfer of the threonylcarbamoyl moiety of threonylcarbamoyl-AMP (TC-AMP) to the N6 group of A37, together with TsaE and TsaB. TsaD likely plays a direct catalytic role in this reaction. This is tRNA N6-adenosine threonylcarbamoyltransferase from Leptospira borgpetersenii serovar Hardjo-bovis (strain JB197).